The chain runs to 122 residues: Large ribosomal subunit protein uL14c (122 aa).

The protein belongs to the universal ribosomal protein uL14 family. As to quaternary structure, part of the 50S ribosomal subunit.

It is found in the plastid. Its subcellular location is the chloroplast. Its function is as follows. Binds to 23S rRNA. This is Large ribosomal subunit protein uL14c from Chlamydomonas reinhardtii (Chlamydomonas smithii).